We begin with the raw amino-acid sequence, 186 residues long: Peptidoglycan-recognition protein SD (186 aa).

A signal peptide spans 1-18; sequence MTWIGLLIVGLTAIAVQG. The region spanning 47-169 is the N-acetylmuramoyl-L-alanine amidase domain; that stretch reads AVIAHTAGGA…RQVSATMSPG (123 aa). Cys57 and Cys63 are oxidised to a cystine. Asn181 carries an N-linked (GlcNAc...) asparagine glycan.

It belongs to the N-acetylmuramoyl-L-alanine amidase 2 family.

Its subcellular location is the secreted. Peptidoglycan-recognition protein that plays a key role in innate immunity by binding to peptidoglycans (PGN) of Gram-positive bacteria and activating the Toll pathway. Has no activity against on Gram-negative bacteria and fungi. Shows some partial redundancy with PRPGP-SA in Gram-positive bacteria recognition. May act by activating the proteolytic cleavage of Spatzle and the subsequent activation of Toll pathway. Recognizes S.aureus PGN. This chain is Peptidoglycan-recognition protein SD (PGRP-SD), found in Drosophila simulans (Fruit fly).